Here is a 271-residue protein sequence, read N- to C-terminus: 4-hydroxy-tetrahydrodipicolinate reductase (271 aa).

Residues 10-15 (GAGGRM), E36, 100-102 (GTT), and 124-127 (SGNM) each bind NAD(+). The Proton donor/acceptor role is filled by H157. H158 contributes to the (S)-2,3,4,5-tetrahydrodipicolinate binding site. Residue K161 is the Proton donor of the active site. (S)-2,3,4,5-tetrahydrodipicolinate is bound at residue 167-168 (GT).

This sequence belongs to the DapB family.

The protein localises to the cytoplasm. The catalysed reaction is (S)-2,3,4,5-tetrahydrodipicolinate + NAD(+) + H2O = (2S,4S)-4-hydroxy-2,3,4,5-tetrahydrodipicolinate + NADH + H(+). The enzyme catalyses (S)-2,3,4,5-tetrahydrodipicolinate + NADP(+) + H2O = (2S,4S)-4-hydroxy-2,3,4,5-tetrahydrodipicolinate + NADPH + H(+). It functions in the pathway amino-acid biosynthesis; L-lysine biosynthesis via DAP pathway; (S)-tetrahydrodipicolinate from L-aspartate: step 4/4. In terms of biological role, catalyzes the conversion of 4-hydroxy-tetrahydrodipicolinate (HTPA) to tetrahydrodipicolinate. The polypeptide is 4-hydroxy-tetrahydrodipicolinate reductase (Rhodopseudomonas palustris (strain ATCC BAA-98 / CGA009)).